A 356-amino-acid chain; its full sequence is MGSIAAGADEDACMYALQLVSSSILPMTLKNAIELGLLETLMAAGGKFLTPAEVAAKLPSAANPEAPDMVDRMLRLLASYNVVSCRTEDGKDGRLSRRYGAAPVCKYLTPNEDGVSMSALALMNQDKVLMESWYYLKDAVLDGGIPFNKAYGMSAFEYHGTDPRFNRVFNEGMKNHSIIITKKLLESYKGFEGLGTLVDVGGGVGATVAAITAHYPTIKGINFDLPHVISEAPPFPGVTHVGGDMFQKVPSGDAILMKWILHDWSDEHCATLLKNCYDALPAHGKVVLVECILPVNPEATPKAQGVFHVDMIMLAHNPGGRERYEREFEALAKGAGFAAMKTTYIYANAWAIEFTK.

123 to 129 lines the substrate pocket; that stretch reads MNQDKVL. Positions 155–173 are substrate binding; it reads AFEYHGTDPRFNRVFNEGM. S-adenosyl-L-methionine contacts are provided by Gly-201, Asp-224, Asp-244, Met-245, and Lys-258. His-262 (proton acceptor) is an active-site residue.

This sequence belongs to the class I-like SAM-binding methyltransferase superfamily. Cation-independent O-methyltransferase family. COMT subfamily. As to quaternary structure, homodimer. The monomer is fully active and dimerization is not required for sequential methylation. Expressed in roots, stems and leaves.

The catalysed reaction is tricetin + 3 S-adenosyl-L-methionine = 3',4',5'-O-trimethyltricetin + 3 S-adenosyl-L-homocysteine + 3 H(+). Flavonoid B-ring-specific O-methyltransferase with a preference for flavones &gt; dihydroflavones &gt; flavonols that possess at least two B-ring hydroxyl groups. Active with tricetin, 5-hydroxyferulic acid, luteolin, quercitin, eriodictyol, quercetagetin, taxifolin, gossypetin and myricetin. No activity with naringenin, apigenin, kaempferol, 7,8-dihydroxy- or 5,7,8-trihydroxy flavones, chlorogenic acid, gallic acid or daphnetin. Catalyzes the sequential O-methylation of tricetin via 3'-O-methyltricetin, 3',5'-O-methyltricetin to 3',4',5'-O-trimethyltricetin. May also be involved in S lignin biosynthesis. The polypeptide is Tricetin 3',4',5'-O-trimethyltransferase (OMT2) (Triticum aestivum (Wheat)).